The chain runs to 286 residues: Energy-coupling factor transporter ATP-binding protein EcfA2 (286 aa).

The region spanning 3–246 (IQFNQVSYIY…KTQLLKWHIE (244 aa)) is the ABC transporter domain. Position 40–47 (40–47 (GQTGSGKS)) interacts with ATP.

Belongs to the ABC transporter superfamily. Energy-coupling factor EcfA family. In terms of assembly, forms a stable energy-coupling factor (ECF) transporter complex composed of 2 membrane-embedded substrate-binding proteins (S component), 2 ATP-binding proteins (A component) and 2 transmembrane proteins (T component).

It is found in the cell membrane. Functionally, ATP-binding (A) component of a common energy-coupling factor (ECF) ABC-transporter complex. Unlike classic ABC transporters this ECF transporter provides the energy necessary to transport a number of different substrates. This is Energy-coupling factor transporter ATP-binding protein EcfA2 from Staphylococcus epidermidis (strain ATCC 35984 / DSM 28319 / BCRC 17069 / CCUG 31568 / BM 3577 / RP62A).